Here is a 172-residue protein sequence, read N- to C-terminus: MSSKKAKTKTTKKRPQRATSNVFAMFDQSQIQEFKEAFNMIDQNRDGFIDKEDLHDMLASLGKNPTDAYLDAMMNEAPGRINFTMFLTMFGEKLNGTDPEDVIRNAFACFDEEATGTIQEDYLRELLTTMGDRFTDEEVDELYREAPIDKKGNFNYIEFTRILKHGAKDKDD.

Residues 1 to 16 (MSSKKAKTKTTKKRPQ) show a composition bias toward basic residues. A disordered region spans residues 1-20 (MSSKKAKTKTTKKRPQRATS). Phosphothreonine; by MLCK and ZIPK/DAPK3 is present on T19. S20 carries the post-translational modification Phosphoserine; by MLCK and ZIPK/DAPK3. EF-hand domains are found at residues 29–64 (SQIQ…LGKN), 98–133 (DPED…MGDR), and 134–169 (FTDE…GAKD). The Ca(2+) site is built by D42, N44, D46, and D53.

In terms of assembly, myosin is a hexamer of 2 heavy chains and 4 light chains: interacts with myosin heavy chain MYO19. Post-translationally, phosphorylation increases the actin-activated myosin ATPase activity and thereby regulates the contractile activity. It is required to generate the driving force in the migration of the cells but not necessary for localization of myosin-2 at the leading edge. Phosphorylation is reduced following epigallocatechin-3-O-gallate treatment.

Myosin regulatory subunit that plays an important role in regulation of both smooth muscle and nonmuscle cell contractile activity via its phosphorylation. Phosphorylation triggers actin polymerization in vascular smooth muscle. Implicated in cytokinesis, receptor capping, and cell locomotion. The chain is Myosin regulatory light chain 12B (Myl12b) from Rattus norvegicus (Rat).